The primary structure comprises 344 residues: MMIQSHPLLAAPLAVGDTIGFFSSSAPATVTAKNRFFRGVEFLQRKGFKLVSGKLTGKTDFYRSGTIKERAQEFNELVYNPDITCIMSTIGGDNSNSLLPFLDYDAIIANPKIIIGYSDTTALLAGIYAKTGLITFYGPALIPSFGEHPPLVDITYESFIKILTRKQSGIYTYTLPEKWSDESINWNENKILRPKKLYKNNCAFYGSGKVEGRVIGGNLNTLTGIWGSEWMPEILNGDILFIEDSRKSIATIERLFSMLKLNRVFDKVSAIILGKHELFDCAGSKRRPYEVLTEVLDGKQIPVLDGFDCSHTHPMLTLPLGVKLAIDFDNKNISITEQYLSTEK.

Belongs to the peptidase S66 family.

Its function is as follows. Involved in specific self-immunity to microcin C7. The protein is Microcin C7 self-immunity protein MccF (mccF) of Escherichia coli.